Consider the following 285-residue polypeptide: MAIYLVGDIQGCFNELSSLLLQVNFDRNNDVLYLAGDLVARGPNSLETLRFVKSLGESAKVVLGNHDLHLLSVHAGIKKAKKSDNLSALLAAPDVNELMDWLAAQPLLQEIPNTCSNSNAINQANNNSAYMSHAGISPQWQLSVALEQAKFIQTKLASSDRNTWLALMYGEKPNDWHQAITEIERFRYSINAFTRMRFCFTDGTLEFEQKDSPENITLTNIVPWYELSQTINNTSWVFGHWASLMGKSSHPNIYPLDTGCVWGNQLTMLRWHDKKYFIQSSELSD.

The protein belongs to the Ap4A hydrolase family.

The catalysed reaction is P(1),P(4)-bis(5'-adenosyl) tetraphosphate + H2O = 2 ADP + 2 H(+). Its function is as follows. Hydrolyzes diadenosine 5',5'''-P1,P4-tetraphosphate to yield ADP. This is Bis(5'-nucleosyl)-tetraphosphatase, symmetrical from Colwellia psychrerythraea (strain 34H / ATCC BAA-681) (Vibrio psychroerythus).